A 92-amino-acid chain; its full sequence is Acylphosphatase (92 aa).

The Acylphosphatase-like domain occupies 5 to 92 (RAHVVVSGKV…GEFSGFKIAF (88 aa)). Active-site residues include Arg-20 and Asn-38.

Belongs to the acylphosphatase family.

The enzyme catalyses an acyl phosphate + H2O = a carboxylate + phosphate + H(+). This chain is Acylphosphatase (acyP), found in Pelotomaculum thermopropionicum (strain DSM 13744 / JCM 10971 / SI).